A 44-amino-acid chain; its full sequence is Photosystem II reaction center protein K (44 aa).

The propeptide occupies 1–7 (MESLLLA). Residues 23–43 (LPIIPVFFLLLAFVWQAAIGF) traverse the membrane as a helical segment.

It belongs to the PsbK family. In terms of assembly, PSII is composed of 1 copy each of membrane proteins PsbA, PsbB, PsbC, PsbD, PsbE, PsbF, PsbH, PsbI, PsbJ, PsbK, PsbL, PsbM, PsbT, PsbX, PsbY, PsbZ, Psb30/Ycf12, at least 3 peripheral proteins of the oxygen-evolving complex and a large number of cofactors. It forms dimeric complexes.

It localises to the plastid. It is found in the chloroplast thylakoid membrane. In terms of biological role, one of the components of the core complex of photosystem II (PSII). PSII is a light-driven water:plastoquinone oxidoreductase that uses light energy to abstract electrons from H(2)O, generating O(2) and a proton gradient subsequently used for ATP formation. It consists of a core antenna complex that captures photons, and an electron transfer chain that converts photonic excitation into a charge separation. The sequence is that of Photosystem II reaction center protein K from Trieres chinensis (Marine centric diatom).